Here is a 145-residue protein sequence, read N- to C-terminus: Large ribosomal subunit protein uL15 (145 aa).

The tract at residues 1–58 (MKLHELSPSEGSRKKRKRVGRGPGSGMGGTSTRGNKGHNQRSGGGTRPGFEGGQMPLH) is disordered. 2 stretches are compositionally biased toward gly residues: residues 21 to 31 (RGPGSGMGGTS) and 42 to 52 (SGGGTRPGFEG).

Belongs to the universal ribosomal protein uL15 family. Part of the 50S ribosomal subunit.

Its function is as follows. Binds to the 23S rRNA. The polypeptide is Large ribosomal subunit protein uL15 (Desulforapulum autotrophicum (strain ATCC 43914 / DSM 3382 / VKM B-1955 / HRM2) (Desulfobacterium autotrophicum)).